The following is a 340-amino-acid chain: Glyceraldehyde-3-phosphate dehydrogenase, cytosolic (340 aa).

Residues 16-17, Asp-38, and Arg-85 contribute to the NAD(+) site; that span reads RI. D-glyceraldehyde 3-phosphate-binding positions include 156-158, Thr-187, 216-217, and Arg-239; these read SCT and TG. Catalysis depends on Cys-157, which acts as the Nucleophile. Asn-321 serves as a coordination point for NAD(+).

The protein belongs to the glyceraldehyde-3-phosphate dehydrogenase family. As to quaternary structure, homotetramer.

The protein resides in the cytoplasm. The catalysed reaction is D-glyceraldehyde 3-phosphate + phosphate + NAD(+) = (2R)-3-phospho-glyceroyl phosphate + NADH + H(+). Its pathway is carbohydrate degradation; glycolysis; pyruvate from D-glyceraldehyde 3-phosphate: step 1/5. In terms of biological role, key enzyme in glycolysis that catalyzes the first step of the pathway by converting D-glyceraldehyde 3-phosphate (G3P) into 3-phospho-D-glyceroyl phosphate. Essential for the maintenance of cellular ATP levels and carbohydrate metabolism. This is Glyceraldehyde-3-phosphate dehydrogenase, cytosolic from Taxus baccata (English yew).